The primary structure comprises 176 residues: Ribosome maturation factor RimM (176 aa).

The region spanning 99-173 (ADEYYWHDLL…TMTITPLEGL (75 aa)) is the PRC barrel domain.

This sequence belongs to the RimM family. In terms of assembly, binds ribosomal protein uS19.

It localises to the cytoplasm. Functionally, an accessory protein needed during the final step in the assembly of 30S ribosomal subunit, possibly for assembly of the head region. Essential for efficient processing of 16S rRNA. May be needed both before and after RbfA during the maturation of 16S rRNA. It has affinity for free ribosomal 30S subunits but not for 70S ribosomes. This chain is Ribosome maturation factor RimM, found in Trichlorobacter lovleyi (strain ATCC BAA-1151 / DSM 17278 / SZ) (Geobacter lovleyi).